Reading from the N-terminus, the 449-residue chain is Na(+)/H(+) antiporter NhaA (449 aa).

A run of 12 helical transmembrane segments spans residues 30–50 (IFLI…WAGA), 69–89 (FGLT…FLVA), 112–132 (LLAA…LNLG), 138–158 (GWGI…GLLG), 168–188 (FLIA…ALFY), 192–212 (LSWI…LMNW), 218–238 (LIWY…SGIH), 241–261 (IAGV…SKIL), 312–332 (SLVD…NAGV), 348–368 (LGIL…FTLI), 386–406 (IIGI…ITNL), and 419–439 (ISIL…LLLT).

Belongs to the NhaA Na(+)/H(+) (TC 2.A.33) antiporter family.

It is found in the cell inner membrane. It carries out the reaction Na(+)(in) + 2 H(+)(out) = Na(+)(out) + 2 H(+)(in). Its function is as follows. Na(+)/H(+) antiporter that extrudes sodium in exchange for external protons. In Christiangramia forsetii (strain DSM 17595 / CGMCC 1.15422 / KT0803) (Gramella forsetii), this protein is Na(+)/H(+) antiporter NhaA.